We begin with the raw amino-acid sequence, 538 residues long: Cytochrome P450 monooxygenase verH (538 aa).

The chain crosses the membrane as a helical span at residues 2–21; the sequence is VFAMLVVCWSIFLGLWMLVS. Residue C445 coordinates heme.

The protein belongs to the cytochrome P450 family. Heme serves as cofactor.

It is found in the membrane. It participates in secondary metabolite biosynthesis; terpenoid biosynthesis. Its pathway is mycotoxin biosynthesis. Cytochrome P450 monooxygenase; part of the gene cluster that mediates the biosynthesis of the neurotoxin verrucosidin, a methylated alpha-pyrone polyketide that inhibits oxidative phosphorylation in mitochondria and thereby causes neurological diseases. The carbon backbone of verrucosidin is synthesized by the HR-PKS verA, and further modified by the other verrucodidin cluster enzymes. The protein is Cytochrome P450 monooxygenase verH of Penicillium polonicum.